A 142-amino-acid chain; its full sequence is Interleukin-3 (142 aa).

Residues 1 to 18 (MSHLPILLLLLLVSPGLQ) form the signal peptide. 3 N-linked (GlcNAc...) asparagine glycosylation sites follow: N33, N88, and N108. C34 and C102 are oxidised to a cystine.

The protein belongs to the IL-3 family. Monomer. As to expression, activated T-cells, mast cells, natural killer cells.

The protein localises to the secreted. Granulocyte/macrophage colony-stimulating factors are cytokines that act in hematopoiesis by controlling the production, differentiation, and function of 2 related white cell populations of the blood, the granulocytes and the monocytes-macrophages. Functionally, this CSF induces granulocytes, macrophages, mast cells, stem cells, erythroid cells, eosinophils and megakaryocytes. The chain is Interleukin-3 (IL3) from Saguinus oedipus (Cotton-top tamarin).